Here is a 293-residue protein sequence, read N- to C-terminus: 4-hydroxy-tetrahydrodipicolinate synthase (293 aa).

Thr45 provides a ligand contact to pyruvate. Tyr133 (proton donor/acceptor) is an active-site residue. Catalysis depends on Lys162, which acts as the Schiff-base intermediate with substrate. Pyruvate is bound at residue Ile204.

This sequence belongs to the DapA family. Homotetramer; dimer of dimers.

Its subcellular location is the cytoplasm. The enzyme catalyses L-aspartate 4-semialdehyde + pyruvate = (2S,4S)-4-hydroxy-2,3,4,5-tetrahydrodipicolinate + H2O + H(+). Its pathway is amino-acid biosynthesis; L-lysine biosynthesis via DAP pathway; (S)-tetrahydrodipicolinate from L-aspartate: step 3/4. Catalyzes the condensation of (S)-aspartate-beta-semialdehyde [(S)-ASA] and pyruvate to 4-hydroxy-tetrahydrodipicolinate (HTPA). This chain is 4-hydroxy-tetrahydrodipicolinate synthase, found in Brucella suis biovar 1 (strain 1330).